The primary structure comprises 236 residues: Demethylmenaquinone methyltransferase (236 aa).

Residues Thr62, Asp80, 107–108 (DA), and Ser124 each bind S-adenosyl-L-methionine.

The protein belongs to the class I-like SAM-binding methyltransferase superfamily. MenG/UbiE family.

The enzyme catalyses a 2-demethylmenaquinol + S-adenosyl-L-methionine = a menaquinol + S-adenosyl-L-homocysteine + H(+). It functions in the pathway quinol/quinone metabolism; menaquinone biosynthesis; menaquinol from 1,4-dihydroxy-2-naphthoate: step 2/2. Its function is as follows. Methyltransferase required for the conversion of demethylmenaquinol (DMKH2) to menaquinol (MKH2). This Thermobifida fusca (strain YX) protein is Demethylmenaquinone methyltransferase.